Reading from the N-terminus, the 127-residue chain is Gonadotropin subunit beta-1 (127 aa).

Residues 1–22 (MHLAVTALCLTLAPVLARASTS) form the signal peptide. 6 disulfide bridges follow: cysteine 23–cysteine 71, cysteine 37–cysteine 86, cysteine 40–cysteine 124, cysteine 48–cysteine 102, cysteine 52–cysteine 104, and cysteine 107–cysteine 114. Asparagine 27 and asparagine 44 each carry an N-linked (GlcNAc...) asparagine glycan.

It belongs to the glycoprotein hormones subunit beta family. In terms of assembly, heterodimer of an alpha and a beta chain.

The protein resides in the secreted. Functionally, involved in gametogenesis and steroidogenesis. The chain is Gonadotropin subunit beta-1 (cgba) from Anguilla japonica (Japanese eel).